The primary structure comprises 449 residues: Trigger factor (449 aa).

Positions 162 to 247 constitute a PPIase FKBP-type domain; the sequence is GDTVTIDYTG…IHEVKSKELP (86 aa). A compositionally biased stretch (basic residues) spans 427–438; the sequence is AKKATKKSTAKK. Residues 427–449 are disordered; the sequence is AKKATKKSTAKKSTKEDEKKADK. Residues 439–449 are compositionally biased toward basic and acidic residues; it reads STKEDEKKADK.

It belongs to the FKBP-type PPIase family. Tig subfamily.

The protein localises to the cytoplasm. It catalyses the reaction [protein]-peptidylproline (omega=180) = [protein]-peptidylproline (omega=0). Functionally, involved in protein export. Acts as a chaperone by maintaining the newly synthesized protein in an open conformation. Functions as a peptidyl-prolyl cis-trans isomerase. This Lactobacillus gasseri (strain ATCC 33323 / DSM 20243 / BCRC 14619 / CIP 102991 / JCM 1131 / KCTC 3163 / NCIMB 11718 / NCTC 13722 / AM63) protein is Trigger factor.